The following is a 306-amino-acid chain: UDP-N-acetylenolpyruvoylglucosamine reductase (306 aa).

Positions 34 to 198 constitute an FAD-binding PCMH-type domain; it reads VGGPADLLIT…LEVTFKLHNS (165 aa). Arg177 is a catalytic residue. Ser227 (proton donor) is an active-site residue. Residue Glu297 is part of the active site.

The protein belongs to the MurB family. The cofactor is FAD.

The protein localises to the cytoplasm. The enzyme catalyses UDP-N-acetyl-alpha-D-muramate + NADP(+) = UDP-N-acetyl-3-O-(1-carboxyvinyl)-alpha-D-glucosamine + NADPH + H(+). It participates in cell wall biogenesis; peptidoglycan biosynthesis. In terms of biological role, cell wall formation. This is UDP-N-acetylenolpyruvoylglucosamine reductase from Clostridium botulinum (strain Langeland / NCTC 10281 / Type F).